A 293-amino-acid chain; its full sequence is GPN-loop GTPase 3 (293 aa).

GTP is bound at residue 13 to 18; it reads GAGKST. A Gly-Pro-Asn (GPN)-loop; involved in dimer interface motif is present at residues 70–72; the sequence is GPN. 176 to 179 lines the GTP pocket; that stretch reads SKMD. Positions 272 to 281 are enriched in basic and acidic residues; the sequence is HEAQEPREPN. Positions 272 to 293 are disordered; sequence HEAQEPREPNDEQDVDYEDADI. Acidic residues predominate over residues 282–293; it reads DEQDVDYEDADI.

This sequence belongs to the GPN-loop GTPase family. In terms of assembly, heterodimers with gpn1 or gpn2. Binds to RNA polymerase II (RNAPII).

Functionally, small GTPase required for proper nuclear import of RNA polymerase II and III (RNAPII and RNAPIII). May act at an RNAP assembly step prior to nuclear import. In Aspergillus fumigatus (strain ATCC MYA-4609 / CBS 101355 / FGSC A1100 / Af293) (Neosartorya fumigata), this protein is GPN-loop GTPase 3.